The primary structure comprises 358 residues: Homoserine O-succinyltransferase (358 aa).

Catalysis depends on C146, which acts as the Acyl-thioester intermediate. Substrate contacts are provided by K167 and S196. The active-site Proton acceptor is H239. E241 is an active-site residue. R253 provides a ligand contact to substrate.

Belongs to the MetA family.

It localises to the cytoplasm. It catalyses the reaction L-homoserine + succinyl-CoA = O-succinyl-L-homoserine + CoA. The protein operates within amino-acid biosynthesis; L-methionine biosynthesis via de novo pathway; O-succinyl-L-homoserine from L-homoserine: step 1/1. In terms of biological role, transfers a succinyl group from succinyl-CoA to L-homoserine, forming succinyl-L-homoserine. This is Homoserine O-succinyltransferase from Nitrosococcus oceani (strain ATCC 19707 / BCRC 17464 / JCM 30415 / NCIMB 11848 / C-107).